A 469-amino-acid polypeptide reads, in one-letter code: uncharacterized protein (469 aa).

3 consecutive transmembrane segments (helical) span residues 42–62 (DVII…AYVI), 179–199 (IVLP…VTPS), and 249–269 (NLKY…GLFV).

The protein localises to the cell membrane. This is an uncharacterized protein from Methanocaldococcus jannaschii (strain ATCC 43067 / DSM 2661 / JAL-1 / JCM 10045 / NBRC 100440) (Methanococcus jannaschii).